A 159-amino-acid polypeptide reads, in one-letter code: Large ribosomal subunit protein bL17 (159 aa).

Residues glutamate 124–lysine 135 are compositionally biased toward low complexity. The interval glutamate 124 to lysine 159 is disordered. Over residues alanine 145–lysine 159 the composition is skewed to acidic residues.

This sequence belongs to the bacterial ribosomal protein bL17 family. As to quaternary structure, part of the 50S ribosomal subunit. Contacts protein L32.

This chain is Large ribosomal subunit protein bL17, found in Corynebacterium aurimucosum (strain ATCC 700975 / DSM 44827 / CIP 107346 / CN-1) (Corynebacterium nigricans).